We begin with the raw amino-acid sequence, 191 residues long: Syndecan-2-A (191 aa).

The first 22 residues, 1-22 (MRNVWLIVPFALLAALSGETWA), serve as a signal peptide directing secretion. Over 23–137 (QADRDLYIDS…NLFHRTEVLA (115 aa)) the chain is Extracellular. Residues 32–60 (STESSGNYPVDDDDYSSGSGSGIPARGDD) are disordered. O-linked (Xyl...) (glycosaminoglycan) serine glycosylation is found at serine 36, serine 48, serine 50, and serine 52. A helical membrane pass occupies residues 138-158 (AVIAGGGIGFLFAVFLILLLV). The Cytoplasmic segment spans residues 159–191 (YRMRKKDEGSYDLGERKPSSAVYQKAPTKEFYA). A disordered region spans residues 168–191 (SYDLGERKPSSAVYQKAPTKEFYA).

The protein belongs to the syndecan proteoglycan family. O-glycosylated; contains both heparan sulfate and chondroitin sulfate.

The protein resides in the membrane. Cell surface proteoglycan. In Xenopus laevis (African clawed frog), this protein is Syndecan-2-A (sdc2-a).